Consider the following 1042-residue polypeptide: Exosome RNA helicase MTR4 (1042 aa).

A2 is modified (N-acetylalanine). The disordered stretch occupies residues 16–74 (DSTTAAGTKKDKEKDKGKWKGPPGSADKAGKRFDGKLQSESTNNGKNKRDVDFEGTDEP). Basic and acidic residues predominate over residues 23 to 33 (TKKDKEKDKGK). Residue K24 forms a Glycyl lysine isopeptide (Lys-Gly) (interchain with G-Cter in SUMO2) linkage. S40 is modified (phosphoserine). Over residues 43 to 52 (KAGKRFDGKL) the composition is skewed to basic and acidic residues. N6-acetyllysine is present on residues K51 and K78. Residues I139, 161–168 (AHTSAGKT), S164, G166, K167, and T168 contribute to the ATP site. In terms of domain architecture, Helicase ATP-binding spans 148–304 (IQCVDNNQSV…WICHLHKQPC (157 aa)). A DEIH box motif is present at residues 252–255 (DEIH). A Glycyl lysine isopeptide (Lys-Gly) (interchain with G-Cter in SUMO2) cross-link involves residue K358. Residues 405–577 (QMTKLDFNTD…NMVLNLLRVE (173 aa)) enclose the Helicase C-terminal domain. Residues K684 and K723 each participate in a glycyl lysine isopeptide (Lys-Gly) (interchain with G-Cter in SUMO2) cross-link.

Belongs to the helicase family. SKI2 subfamily. Component of a TRAMP-like complex, an ATP-dependent exosome regulatory complex consisting of a helicase (MTREX), an oligadenylate polymerase (TENT4B or TENT4A), and a substrate specific RNA-binding factor (ZCCHC7 or ZCCHC8). Several TRAMP-like complexes exist with specific compositions and are associated with nuclear, or nucleolar RNA exosomes. Identified in the spliceosome C complex. Component of the poly(A) tail exosome targeting (PAXT) complex made of PABPN1, ZFC3H1 and MTREX that directs a subset of long and polyadenylated poly(A) RNAs for exosomal degradation. Component of the nuclear exosome targeting (NEXT) complex composed of MTREX, ZCCHC8, and RBM7 that directs a subset of non-coding short-lived RNAs for exosomal degradation. Interacts with ZCCHC8; this interaction bridges the interaction between RBM7 and MTREX. Binds to ZFC3H1 and RBM7 in a RNase-insensitive manner. Interacts with EXOSC10; the interaction mediates the association of MTREX with nuclear RNA exosomes. Interacts with isoform 1 of NVL in an ATP-dependent manner; the interaction is required to associate NVL with nuclear RNA exosome. Interacts with WDR74; the interaction dissociation in a late stage of rRNA synthesis is required for appropriate maturation of pre-60S particles and depends on the ATPase activity of NVL. Interacts with MPHOSPH6. Interacts with the RNA cap-binding complex proteins NCBP1 and SRRT. Interacts with NRDE2; the interaction is direct and negatively regulates MTREX function in exosomal degradation by changing its conformation precluding interaction with ZFC3H1, the RNA cap-binding complex proteins NCBP1 and SRRT, and association with the exosome. Associates with the RNA exosome complex.

The protein localises to the nucleus. It localises to the nucleoplasm. The protein resides in the nucleolus. It is found in the nucleus speckle. It carries out the reaction ATP + H2O = ADP + phosphate + H(+). Its activity is regulated as follows. Activated when MTREX is incorporated into NEXT complex an the nuclear RNA exosome complex. In terms of biological role, catalyzes the ATP-dependent unwinding of RNA duplexes with a single-stranded 3' RNA extension. Central subunit of many protein complexes, namely TRAMP-like, nuclear exosome targeting (NEXT) and poly(A) tail exosome targeting (PAXT). NEXT functions as an RNA exosome cofactor that directs a subset of non-coding short-lived RNAs for exosomal degradation. NEXT is involved in surveillance and turnover of aberrant transcripts and non-coding RNAs. PAXT directs a subset of long and polyadenylated poly(A) RNAs for exosomal degradation. The RNA exosome is fundamental for the degradation of RNA in eukaryotic nuclei. Substrate targeting is facilitated by its cofactor ZCCHC8, which links to RNA-binding protein adapters. Associated with the RNA exosome complex and involved in the 3'-processing of the 7S pre-RNA to the mature 5.8S rRNA. May be involved in pre-mRNA splicing. In the context of NEXT complex can also in vitro unwind DNA:RNA heteroduplexes with a 3' poly (A) RNA tracking strand. Can promote unwinding and degradation of structured RNA substrates when associated with the nuclear exosome and its cofactors. Can displace a DNA strand while translocating on RNA to ultimately degrade the RNA within a DNA/RNA heteroduplex. Plays a role in DNA damage response. The polypeptide is Exosome RNA helicase MTR4 (Homo sapiens (Human)).